The primary structure comprises 153 residues: UPF0743 protein YCR087C-A (153 aa).

2 C2HC LYAR-type zinc fingers span residues 1–26 and 27–52; these read MVTF…YRCP and NAYY…TSCI. Positions 6, 9, 21, 25, 32, 35, 48, and 51 each coordinate Zn(2+). Residues 63–96 are disordered; sequence YKGNKKQKQKQQQKQQQKQHQHQPVATPAKKVEK. Residues 65–83 are compositionally biased toward basic residues; it reads GNKKQKQKQQQKQQQKQHQ.

This sequence belongs to the UPF0743 family.

The protein localises to the nucleus. The protein resides in the nucleolus. This chain is UPF0743 protein YCR087C-A, found in Saccharomyces cerevisiae (strain ATCC 204508 / S288c) (Baker's yeast).